Consider the following 317-residue polypeptide: Protoheme IX farnesyltransferase (317 aa).

A run of 8 helical transmembrane segments spans residues 39–59, 60–80, 109–129, 131–151, 160–180, 184–204, 249–269, and 297–317; these read VLYL…GGIN, PILG…AGAI, GALA…WLAT, LLAA…YTMW, IVIG…AATG, LLPV…FWAL, VLHL…LAFV, and FKFS…DHLV.

It belongs to the UbiA prenyltransferase family. Protoheme IX farnesyltransferase subfamily.

It is found in the cell inner membrane. It carries out the reaction heme b + (2E,6E)-farnesyl diphosphate + H2O = Fe(II)-heme o + diphosphate. Its pathway is porphyrin-containing compound metabolism; heme O biosynthesis; heme O from protoheme: step 1/1. Functionally, converts heme B (protoheme IX) to heme O by substitution of the vinyl group on carbon 2 of heme B porphyrin ring with a hydroxyethyl farnesyl side group. This chain is Protoheme IX farnesyltransferase, found in Acidiphilium cryptum (strain JF-5).